The sequence spans 282 residues: Bis(5'-nucleosyl)-tetraphosphatase, symmetrical (282 aa).

This sequence belongs to the Ap4A hydrolase family.

The catalysed reaction is P(1),P(4)-bis(5'-adenosyl) tetraphosphate + H2O = 2 ADP + 2 H(+). Its function is as follows. Hydrolyzes diadenosine 5',5'''-P1,P4-tetraphosphate to yield ADP. In Salmonella paratyphi C (strain RKS4594), this protein is Bis(5'-nucleosyl)-tetraphosphatase, symmetrical.